A 518-amino-acid polypeptide reads, in one-letter code: Glycerophosphoinositol transporter 1 (518 aa).

Residues Met1 to Asn44 lie on the Cytoplasmic side of the membrane. Residues Ile45 to Met65 traverse the membrane as a helical segment. At Ser66–Asn91 the chain is on the extracellular side. Asn80 carries N-linked (GlcNAc...) asparagine glycosylation. The helical transmembrane segment at Ala92–Ser112 threads the bilayer. The Cytoplasmic segment spans residues Arg113 to Lys114. The chain crosses the membrane as a helical span at residues Ser115 to Gly136. The Extracellular portion of the chain corresponds to Thr137–Thr138. The chain crosses the membrane as a helical span at residues Val139–Ala159. Topologically, residues Glu160–Leu184 are cytoplasmic. A helical membrane pass occupies residues Val185–Ile205. The Extracellular segment spans residues Val206–Leu216. A helical membrane pass occupies residues Glu217 to Phe237. Residues Arg238–Arg268 are Cytoplasmic-facing. A helical membrane pass occupies residues Leu269–Phe289. Residues Ser290–Lys306 lie on the Extracellular side of the membrane. The chain crosses the membrane as a helical span at residues Val307–Tyr327. The Cytoplasmic segment spans residues Leu328–Lys335. A helical membrane pass occupies residues Tyr336–Tyr356. The Extracellular segment spans residues Asp357–Lys360. Residues Lys361–Pro381 traverse the membrane as a helical segment. Over Gly382–Gly399 the chain is Cytoplasmic. Residues Val400–Phe420 form a helical membrane-spanning segment. Residues Gln421–Arg430 are Extracellular-facing. The helical transmembrane segment at Trp431–Val451 threads the bilayer. Residues Pro452–Ser518 lie on the Cytoplasmic side of the membrane.

The protein belongs to the major facilitator superfamily. Sugar transporter (TC 2.A.1.1) family.

The protein localises to the cell membrane. It carries out the reaction sn-glycerol 3-phosphocholine(out) = sn-glycerol 3-phosphocholine(in). The catalysed reaction is sn-glycero-3-phospho-1D-myo-inositol(out) = sn-glycero-3-phospho-1D-myo-inositol(in). Functionally, glycerophosphodiester transporter that mediates uptake of both glycerophosphoinositol (GroPIns) and glycerophosphocholine (GroPCho) as sources of the nutrients inositol and phosphate. The polypeptide is Glycerophosphoinositol transporter 1 (Saccharomyces cerevisiae (strain ATCC 204508 / S288c) (Baker's yeast)).